A 493-amino-acid chain; its full sequence is Galactose-1-phosphate uridylyltransferase 2 (493 aa).

This sequence belongs to the galactose-1-phosphate uridylyltransferase type 2 family.

It is found in the cytoplasm. It catalyses the reaction alpha-D-galactose 1-phosphate + UDP-alpha-D-glucose = alpha-D-glucose 1-phosphate + UDP-alpha-D-galactose. It participates in carbohydrate metabolism; galactose metabolism. This chain is Galactose-1-phosphate uridylyltransferase 2 (galT2), found in Streptococcus pneumoniae (strain ATCC BAA-255 / R6).